The following is a 752-amino-acid chain: DNA topoisomerase 4 subunit A (752 aa).

The 464-residue stretch at 31–494 (LPFIGDGLKP…EAKAMSEHDM (464 aa)) folds into the Topo IIA-type catalytic domain. Residue tyrosine 120 is the O-(5'-phospho-DNA)-tyrosine intermediate of the active site. The disordered stretch occupies residues 472 to 492 (YGDDRRSPLREREEAKAMSEH). Residues 473–492 (GDDRRSPLREREEAKAMSEH) show a composition bias toward basic and acidic residues.

Belongs to the type II topoisomerase GyrA/ParC subunit family. ParC type 1 subfamily. As to quaternary structure, heterotetramer composed of ParC and ParE.

It localises to the cell membrane. It carries out the reaction ATP-dependent breakage, passage and rejoining of double-stranded DNA.. Its function is as follows. Topoisomerase IV is essential for chromosome segregation. It relaxes supercoiled DNA. Performs the decatenation events required during the replication of a circular DNA molecule. This Salmonella typhimurium (strain LT2 / SGSC1412 / ATCC 700720) protein is DNA topoisomerase 4 subunit A.